Here is a 155-residue protein sequence, read N- to C-terminus: MPIRVIAKNKKAYFDYEILQSLESGIVLQGSEVKSIRAGRVNLKDSFIKIIRGEAFLFNAHISFLQTTYTHFKPNERRERKLLLHKKEIDKLFGSVSKESLSIVPLNIYFNQKNKIKLCIALVRGKKLHDKRESIKKKMLEREARAHMKSYGKKL.

Belongs to the SmpB family.

Its subcellular location is the cytoplasm. Functionally, required for rescue of stalled ribosomes mediated by trans-translation. Binds to transfer-messenger RNA (tmRNA), required for stable association of tmRNA with ribosomes. tmRNA and SmpB together mimic tRNA shape, replacing the anticodon stem-loop with SmpB. tmRNA is encoded by the ssrA gene; the 2 termini fold to resemble tRNA(Ala) and it encodes a 'tag peptide', a short internal open reading frame. During trans-translation Ala-aminoacylated tmRNA acts like a tRNA, entering the A-site of stalled ribosomes, displacing the stalled mRNA. The ribosome then switches to translate the ORF on the tmRNA; the nascent peptide is terminated with the 'tag peptide' encoded by the tmRNA and targeted for degradation. The ribosome is freed to recommence translation, which seems to be the essential function of trans-translation. The polypeptide is SsrA-binding protein (Helicobacter hepaticus (strain ATCC 51449 / 3B1)).